The primary structure comprises 224 residues: Phosphoribosylformylglycinamidine synthase subunit PurQ (224 aa).

Residues 2–224 enclose the Glutamine amidotransferase type-1 domain; that stretch reads KFAVIVFPGS…IVDNFVKGGV (223 aa). The active-site Nucleophile is the cysteine 86. Residues histidine 194 and glutamate 196 contribute to the active site.

In terms of assembly, part of the FGAM synthase complex composed of 1 PurL, 1 PurQ and 2 PurS subunits.

Its subcellular location is the cytoplasm. The enzyme catalyses N(2)-formyl-N(1)-(5-phospho-beta-D-ribosyl)glycinamide + L-glutamine + ATP + H2O = 2-formamido-N(1)-(5-O-phospho-beta-D-ribosyl)acetamidine + L-glutamate + ADP + phosphate + H(+). It carries out the reaction L-glutamine + H2O = L-glutamate + NH4(+). The protein operates within purine metabolism; IMP biosynthesis via de novo pathway; 5-amino-1-(5-phospho-D-ribosyl)imidazole from N(2)-formyl-N(1)-(5-phospho-D-ribosyl)glycinamide: step 1/2. Its function is as follows. Part of the phosphoribosylformylglycinamidine synthase complex involved in the purines biosynthetic pathway. Catalyzes the ATP-dependent conversion of formylglycinamide ribonucleotide (FGAR) and glutamine to yield formylglycinamidine ribonucleotide (FGAM) and glutamate. The FGAM synthase complex is composed of three subunits. PurQ produces an ammonia molecule by converting glutamine to glutamate. PurL transfers the ammonia molecule to FGAR to form FGAM in an ATP-dependent manner. PurS interacts with PurQ and PurL and is thought to assist in the transfer of the ammonia molecule from PurQ to PurL. The polypeptide is Phosphoribosylformylglycinamidine synthase subunit PurQ (Caldanaerobacter subterraneus subsp. tengcongensis (strain DSM 15242 / JCM 11007 / NBRC 100824 / MB4) (Thermoanaerobacter tengcongensis)).